The following is a 349-amino-acid chain: D-alanine--D-alanine ligase (349 aa).

Positions 133–335 constitute an ATP-grasp domain; that stretch reads QVLESATTIP…YSVLIEELVS (203 aa). 163-218 is an ATP binding site; the sequence is EEKLIYPVFVKPANMGSSVGISKAENRTDLKQAIALALKYDSRVLIEQGVDAREIE. Mg(2+) contacts are provided by Asp-289, Glu-302, and Asn-304.

It belongs to the D-alanine--D-alanine ligase family. Mg(2+) is required as a cofactor. Requires Mn(2+) as cofactor.

The protein resides in the cytoplasm. It catalyses the reaction 2 D-alanine + ATP = D-alanyl-D-alanine + ADP + phosphate + H(+). The protein operates within cell wall biogenesis; peptidoglycan biosynthesis. Its function is as follows. Cell wall formation. The chain is D-alanine--D-alanine ligase from Streptococcus mutans serotype c (strain ATCC 700610 / UA159).